The following is a 443-amino-acid chain: Glutamate--tRNA ligase 1 (443 aa).

The 'HIGH' region signature appears at 7 to 17; it reads PSPTGYLHVGN. Residues 236–240 carry the 'KMSKS' region motif; the sequence is KISKR. Residue K239 coordinates ATP.

It belongs to the class-I aminoacyl-tRNA synthetase family. Glutamate--tRNA ligase type 1 subfamily. Monomer.

The protein localises to the cytoplasm. The enzyme catalyses tRNA(Glu) + L-glutamate + ATP = L-glutamyl-tRNA(Glu) + AMP + diphosphate. Catalyzes the attachment of glutamate to tRNA(Glu) in a two-step reaction: glutamate is first activated by ATP to form Glu-AMP and then transferred to the acceptor end of tRNA(Glu). In Ehrlichia chaffeensis (strain ATCC CRL-10679 / Arkansas), this protein is Glutamate--tRNA ligase 1.